Here is a 167-residue protein sequence, read N- to C-terminus: Leptin (167 aa).

Residues Met1–Ala21 form the signal peptide. Cys117 and Cys167 are disulfide-bonded.

It belongs to the leptin family.

Its subcellular location is the secreted. Its function is as follows. Key player in the regulation of energy balance and body weight control. Once released into the circulation, has central and peripheral effects by binding LEPR, found in many tissues, which results in the activation of several major signaling pathways. In the hypothalamus, acts as an appetite-regulating factor that induces a decrease in food intake and an increase in energy consumption by inducing anorexinogenic factors and suppressing orexigenic neuropeptides, also regulates bone mass and secretion of hypothalamo-pituitary-adrenal hormones. In the periphery, increases basal metabolism, influences reproductive function, regulates pancreatic beta-cell function and insulin secretion, is pro-angiogenic for endothelial cell and affects innate and adaptive immunity. In the arcuate nucleus of the hypothalamus, activates by depolarization POMC neurons inducing FOS and SOCS3 expression to release anorexigenic peptides and inhibits by hyperpolarization NPY neurons inducing SOCS3 with a consequent reduction on release of orexigenic peptides. In addition to its known satiety inducing effect, has a modulatory role in nutrient absorption. In the intestine, reduces glucose absorption by enterocytes by activating PKC and leading to a sequential activation of p38, PI3K and ERK signaling pathways which exerts an inhibitory effect on glucose absorption. Acts as a growth factor on certain tissues, through the activation of different signaling pathways increases expression of genes involved in cell cycle regulation such as CCND1, via JAK2-STAT3 pathway, or VEGFA, via MAPK1/3 and PI3K-AKT1 pathways. May also play an apoptotic role via JAK2-STAT3 pathway and up-regulation of BIRC5 expression. Pro-angiogenic, has mitogenic activity on vascular endothelial cells and plays a role in matrix remodeling by regulating the expression of matrix metalloproteinases (MMPs) and tissue inhibitors of metalloproteinases (TIMPs). In innate immunity, modulates the activity and function of neutrophils by increasing chemotaxis and the secretion of oxygen radicals. Increases phagocytosis by macrophages and enhances secretion of pro-inflammatory mediators. Increases cytotoxic ability of NK cells. Plays a pro-inflammatory role, in synergy with IL1B, by inducing NOS2 which promotes the production of IL6, IL8 and Prostaglandin E2, through a signaling pathway that involves JAK2, PI3K, MAP2K1/MEK1 and MAPK14/p38. In adaptive immunity, promotes the switch of memory T-cells towards T helper-1 cell immune responses. Increases CD4(+)CD25(-) T-cell proliferation and reduces autophagy during TCR (T-cell receptor) stimulation, through MTOR signaling pathway activation and BCL2 up-regulation. In Phoca vitulina (Harbor seal), this protein is Leptin (LEP).